Reading from the N-terminus, the 508-residue chain is Light-independent protochlorophyllide reductase subunit B (508 aa).

Asp-36 serves as a coordination point for [4Fe-4S] cluster. Asp-294 serves as the catalytic Proton donor. Residue 429 to 430 (GM) participates in substrate binding.

The protein belongs to the ChlB/BchB/BchZ family. As to quaternary structure, protochlorophyllide reductase is composed of three subunits; ChlL, ChlN and ChlB. Forms a heterotetramer of two ChlB and two ChlN subunits. It depends on [4Fe-4S] cluster as a cofactor.

The enzyme catalyses chlorophyllide a + oxidized 2[4Fe-4S]-[ferredoxin] + 2 ADP + 2 phosphate = protochlorophyllide a + reduced 2[4Fe-4S]-[ferredoxin] + 2 ATP + 2 H2O. Its pathway is porphyrin-containing compound metabolism; chlorophyll biosynthesis (light-independent). Its function is as follows. Component of the dark-operative protochlorophyllide reductase (DPOR) that uses Mg-ATP and reduced ferredoxin to reduce ring D of protochlorophyllide (Pchlide) to form chlorophyllide a (Chlide). This reaction is light-independent. The NB-protein (ChlN-ChlB) is the catalytic component of the complex. In Crocosphaera subtropica (strain ATCC 51142 / BH68) (Cyanothece sp. (strain ATCC 51142)), this protein is Light-independent protochlorophyllide reductase subunit B.